A 1262-amino-acid chain; its full sequence is MRGGSSLDSFPGKGTLHTLEIENFKSYKGKHTIGPFTRFTAIIGPNGSGKSNLMDAISFVLGEKPSSLRVRKYADLIHGAPINKPVAKKCRVTMNYKYSDGKVKAFTRGVNNGTSEHLLDGQTVTSAAYSQEMESINIFIKARNFLVYQGAIENIAMKTPKERTQLFEELSRSHEFQAEYERLKVEMTKAEDDTQHNMNKRRGIAQEKREAKMEKDEAEKYQTMKNELAAKSTMLFLHQLFHCERTIDESKEEINAQKKTIASLEATRSKEEAKIAAVHQEHRKALREVQKMTRKLDQKETDLAEKQQNMLTLKVSVAHEHKKLEIAKKMLAAAESKAENNSTQLADLKKSKKELEKKKAAYEAEIQDMMQRGELNLSDEQVREYGQLKDQAQRESAMVQRELLMAEQVFEGDKSSLNHELRRQKEHQERVKAKEGDVRRIETQIATLAQRIKETEEETKILKADLKKIENDVVIDKSAAAEYNKELVAVVRQLSEASGDSAEGERNQRRTEALEGLKKNFPESVYGRLVDLCQPSHKRFNIATTKILQKHMNSIVCDTEETAAKAIVYLKDHRYPPETFLPNDALVVNPLNEKLREIKKPAGVKLVFDVINPQHQAARKALQFVCGNALVCESQEDAKQLAYGGGELKDRFKAVSMDGTLFQQSGVMSGGSADLRQKSKKWDEKVVKQLREKRNQLNEKIADLQKHRRRELEVESVRSKINGNEQRLAMMKRDLKNMREMQLERLQNELEGMTAEMNMLPPRISNCQEKLERSESTLKSLQTKSNEVADRIFADFCTRVGIASIRDYENREMRIKQEMEDKLRSFDDDIQKLAYEIDFVTEQDGNRKVEVEKEKVSQIDRQYKDMKKKEKTAAAALKEHTESMEQDKEVLEEKKALSHKLETEWNEVKKIAQVAMKDFTKAEKELLRLESLLTKKQYERHSLLHSVKLGQIALPLKSGSMADVEYEEDDGDDTASQSSQSATDGPSVSEEQIQREQHIKINYDSLPREYKDVDDDDGVRQMSNRLNVEIDELQKNVSKMNAPNLKANQRMAEVKEREAESTEELENARKKAKRIRQQFEKVKTDRYRRFQDFFDPVANTIDDIYKQLSRNTSAQAFLGADNMEEPYLDGIQYNCVAPGKRFRPMDNLSGGEKTIAALALLFAVHGRNPAPFFVLDEIDAALDNTNIGKVASYICESAREHMQIIVISLKEEFYNKADSLIGIFPYPAACTTSGVLTFDLTRFKQIGLNEMTENPPTPSIAT.

The stretch at 171–497 forms a coiled coil; sequence SRSHEFQAEY…VAVVRQLSEA (327 aa). Residues 524–642 enclose the SMC hinge domain; sequence SVYGRLVDLC…ESQEDAKQLA (119 aa). Residues 680 to 937 are a coiled coil; the sequence is KKWDEKVVKQ…RLESLLTKKQ (258 aa). The disordered stretch occupies residues 965-994; sequence EYEEDDGDDTASQSSQSATDGPSVSEEQIQ. A compositionally biased stretch (polar residues) spans 974–991; the sequence is TASQSSQSATDGPSVSEE. The stretch at 1017–1086 forms a coiled coil; that stretch reads DGVRQMSNRL…QQFEKVKTDR (70 aa). The DA-box motif lies at 1148–1183; that stretch reads LSGGEKTIAALALLFAVHGRNPAPFFVLDEIDAALD.

Belongs to the SMC family. SMC1 subfamily. Component of the cohesin complex, composed of the smc-1 and smc-3 heterodimer attached via their SMC hinge domain, scc-1 which links them, and scc-3. Interacts with smc-3, scc-1, scc-3 and tim-1.

It localises to the nucleus. The protein localises to the chromosome. Its function is as follows. Involved in chromosome cohesion during cell cycle and in DNA repair. Required for chromosome segregation during mitosis. Central component of cohesin complex. The cohesin complex is required for the cohesion of sister chromatids after DNA replication. The cohesin complex apparently forms a large proteinaceous ring within which sister chromatids can be trapped. At anaphase, the complex is cleaved and dissociates from chromatin, allowing sister chromatids to segregate. This chain is Structural maintenance of chromosomes protein 1, found in Caenorhabditis elegans.